Reading from the N-terminus, the 460-residue chain is MFEKYPGKMEGLFRHNPYTAFPPAVPGLPPGLPPAVSFGSLQGAFQPKSTNPELPPRLGPVPSGLSQKGTQIPDHFRPPLRKPGKWCAMHVRVAYMILRHQEKMKGDSHKLDFRNDLLPCLPGPYGALPPGQELSHPASLFTATGAVHAAANPFTAAPGAHGPFLSPSTHIDPFGRPTSFASLAALSNGAFGGLGSPTFNSGAVFAQKESPGAPPAFASPPDPWGRLHRSPLTFPAWVRPPEAARTPGSDKERPVERREPSITKEEKDRDLPFSRPQLRVSPATPKARAGEEGPRPTKESVRVKEERKEEAAAAAAAAAAAAAAAAAAATGPQGLHLLFERPRPPPFLGPSPPDRCAGFLEPTWLAAPPRLARPPRFYEAGEELTGPGAVAAARLYGLEPAHPLLYSRLAPPPPPAAAPGTPHLLSKTPPGALLGAPPPLVPAPRPSSPPRGPGPARADR.

Residue Lys8 forms a Glycyl lysine isopeptide (Lys-Gly) (interchain with G-Cter in SUMO2) linkage. Disordered stretches follow at residues 40–79 (SLQG…FRPP), 205–311 (FAQK…KEEA), and 406–460 (YSRL…RADR). Residues 212 to 223 (GAPPAFASPPDP) show a composition bias toward pro residues. Asymmetric dimethylarginine is present on residues Arg229 and Arg239. The segment covering 248 to 272 (GSDKERPVERREPSITKEEKDRDLP) has biased composition (basic and acidic residues). The residue at position 281 (Ser281) is a Phosphoserine. The segment covering 288-311 (RAGEEGPRPTKESVRVKEERKEEA) has biased composition (basic and acidic residues). Residues 436-453 (APPPLVPAPRPSSPPRGP) are compositionally biased toward pro residues.

This is Probable fibrosin-1 (FBRS) from Homo sapiens (Human).